A 447-amino-acid chain; its full sequence is Chordin-like protein 1 (447 aa).

The N-terminal stretch at 1–22 (MEGIKYIASLVFFFVFLEASKT) is a signal peptide. VWFC domains are found at residues 30–95 (TYCM…PRCP) and 108–174 (KSCE…RVCR). Asn-113 carries N-linked (GlcNAc...) asparagine glycosylation. A Cell attachment site motif is present at residues 174–176 (RGD). The segment at 199–219 (HSYLRSPYDPPPSRQAGGLPR) is disordered. The VWFC 3 domain occupies 253–318 (QVCVSNGKTY…LDGKCCKVCP (66 aa)). N-linked (GlcNAc...) asparagine glycosylation is present at Asn-286.

Its subcellular location is the secreted. Functionally, seems to antagonize the function of BMP4 by binding to it and preventing its interaction with receptors. Alters the fate commitment of neural stem cells from gliogenesis to neurogenesis. Contributes to neuronal differentiation of neural stem cells in the brain by preventing the adoption of a glial fate. May play a crucial role in dorsoventral axis formation. May play a role in embryonic bone formation. Plays a role during anterior segment eye development. The sequence is that of Chordin-like protein 1 (Chrdl1) from Rattus norvegicus (Rat).